The following is a 103-amino-acid chain: RNA-binding protein Hfq (103 aa).

The region spanning 9–68 is the Sm domain; the sequence is DPFLNALRRERVPVSIYLVNGIKLQGQIESFDQFVILLKNTVSQMVYKHAISTVVPSRPV. The segment at 63-103 is disordered; it reads VPSRPVSHHSNNAGGGTGSNFHHGSNAQGSSAPAQDSDETE. The span at 81 to 96 shows a compositional bias: polar residues; that stretch reads SNFHHGSNAQGSSAPA.

The protein belongs to the Hfq family. In terms of assembly, homohexamer.

Its function is as follows. RNA chaperone that binds small regulatory RNA (sRNAs) and mRNAs to facilitate mRNA translational regulation in response to envelope stress, environmental stress and changes in metabolite concentrations. Also binds with high specificity to tRNAs. This Enterobacter sp. (strain 638) protein is RNA-binding protein Hfq.